Here is a 282-residue protein sequence, read N- to C-terminus: Release factor glutamine methyltransferase (282 aa).

The S-adenosyl-L-methionine site is built by aspartate 141, phenylalanine 169, and asparagine 186. 186-189 (NPPY) is a binding site for substrate.

The protein belongs to the protein N5-glutamine methyltransferase family. PrmC subfamily.

The enzyme catalyses L-glutaminyl-[peptide chain release factor] + S-adenosyl-L-methionine = N(5)-methyl-L-glutaminyl-[peptide chain release factor] + S-adenosyl-L-homocysteine + H(+). Methylates the class 1 translation termination release factors RF1/PrfA and RF2/PrfB on the glutamine residue of the universally conserved GGQ motif. This chain is Release factor glutamine methyltransferase, found in Mycoplasma mycoides subsp. mycoides SC (strain CCUG 32753 / NCTC 10114 / PG1).